The sequence spans 132 residues: Small ribosomal subunit protein uS11 (132 aa).

This sequence belongs to the universal ribosomal protein uS11 family. In terms of assembly, part of the 30S ribosomal subunit.

Located on the platform of the 30S subunit. The protein is Small ribosomal subunit protein uS11 of Thermoplasma volcanium (strain ATCC 51530 / DSM 4299 / JCM 9571 / NBRC 15438 / GSS1).